A 354-amino-acid chain; its full sequence is Probable disease resistance protein At5g45490 (354 aa).

The stretch at 33 to 53 (AKGNLEKKRDDNEEEERLKTE) forms a coiled coil. An NB-ARC domain is found at 45–122 (EEEERLKTES…VYAPRVWVSM (78 aa)). 91-98 (GEYGVGKT) contributes to the ATP binding site. The disordered stretch occupies residues 328–354 (DDEVGPVGSTHGQTDSSNRQPANQASS). Residues 337-354 (THGQTDSSNRQPANQASS) show a composition bias toward polar residues.

Functionally, possible disease resistance protein. The chain is Probable disease resistance protein At5g45490 from Arabidopsis thaliana (Mouse-ear cress).